Reading from the N-terminus, the 534-residue chain is Lysophosphatidylcholine acyltransferase 1 (534 aa).

Residues 1 to 22 (MRLRGCGPRAAPASSAGASDAR) form a disordered region. Topologically, residues 1-57 (MRLRGCGPRAAPASSAGASDARLLAPPGRNPFVHELRLSALQKAQVALMTLTLFPVR) are cytoplasmic. Positions 7-22 (GPRAAPASSAGASDAR) are enriched in low complexity. Residues 58–78 (LLVAAAMMLLAWPLALVASLG) form a helical; Signal-anchor for type II membrane protein membrane-spanning segment. Residues 79 to 534 (SAEKEPEQPP…GRKPVRKKLD (456 aa)) are Lumenal-facing. Residues 135-140 (HSSYFD) carry the HXXXXD motif motif. 2 EF-hand domains span residues 379–414 (PVSD…VCRP) and 451–486 (VAEL…YPAF). Residues Asp392, Ser394, Ser396, Glu398, and Glu403 each contribute to the Ca(2+) site. The tract at residues 512-534 (GFCADFSPENSDAGRKPVRKKLD) is disordered. Residues 523-534 (DAGRKPVRKKLD) show a composition bias toward basic and acidic residues. Positions 531–534 (KKLD) match the Di-lysine motif motif.

This sequence belongs to the 1-acyl-sn-glycerol-3-phosphate acyltransferase family. In terms of tissue distribution, erythrocytes.

It localises to the endoplasmic reticulum membrane. The protein localises to the golgi apparatus membrane. Its subcellular location is the cell membrane. It is found in the lipid droplet. It carries out the reaction a 1-acyl-sn-glycero-3-phosphocholine + an acyl-CoA = a 1,2-diacyl-sn-glycero-3-phosphocholine + CoA. It catalyses the reaction a 1-acyl-sn-glycero-3-phosphate + an acyl-CoA = a 1,2-diacyl-sn-glycero-3-phosphate + CoA. The catalysed reaction is a 1-O-alkyl-sn-glycero-3-phosphocholine + acetyl-CoA = a 1-O-alkyl-2-acetyl-sn-glycero-3-phosphocholine + CoA. The enzyme catalyses a 1-O-(1Z-alkenyl)-sn-glycero-3-phosphocholine + an acyl-CoA = a 1-O-(1Z-alkenyl)-2-acyl-sn-glycero-3-phosphocholine + CoA. It carries out the reaction 1-acyl-sn-glycero-3-phospho-(1'-sn-glycerol) + an acyl-CoA = a 1,2-diacyl-sn-glycero-3-phospho-(1'-sn-glycerol) + CoA. It catalyses the reaction 1-hexadecanoyl-sn-glycero-3-phosphocholine + (9Z)-octadecenoyl-CoA = 1-hexadecanoyl-2-(9Z-octadecenoyl)-sn-glycero-3-phosphocholine + CoA. The catalysed reaction is 1-hexadecanoyl-sn-glycero-3-phosphocholine + hexadecanoyl-CoA = 1,2-dihexadecanoyl-sn-glycero-3-phosphocholine + CoA. The enzyme catalyses 1-O-hexadecyl-sn-glycero-3-phosphocholine + hexadecanoyl-CoA = 1-O-hexadecyl-2-hexadecanoyl-sn-glycero-3-phosphocholine + CoA. It carries out the reaction a 1-O-(1Z-alkenyl)-sn-glycero-3-phosphocholine + hexadecanoyl-CoA = 1-O-(1Z)-alkenyl-2-hexadecanoyl-sn-glycero-3-phosphocholine + CoA. It catalyses the reaction 1-hexadecanoyl-sn-glycero-3-phospho-(1'-sn-glycerol) + hexadecanoyl-CoA = 1,2-dihexadecanoyl-sn-glycero-3-phospho-(1'-sn-glycerol) + CoA. The catalysed reaction is 1-dodecanoyl-sn-glycero-3-phosphocholine + hexadecanoyl-CoA = 1-dodecanoyl-2-hexadecanoyl-sn-glycero-3-phosphocholine + CoA. The enzyme catalyses 1-tetradecanoyl-sn-glycero-3-phosphocholine + hexadecanoyl-CoA = 1-tetradecanoyl-2-hexadecanoyl-sn-glycero-3-phosphocholine + CoA. It carries out the reaction 1-O-octadecyl-sn-glycero-3-phosphocholine + hexadecanoyl-CoA = 1-O-octadecyl-2-hexadecanoyl-sn-glycero-3-phosphocholine + CoA. It catalyses the reaction 1-octadecanoyl-sn-glycero-3-phosphocholine + hexadecanoyl-CoA = 1-octadecanoyl-2-hexadecanoyl-sn-glycero-3-phosphocholine + CoA. The catalysed reaction is 1-(9Z-octadecenoyl)-sn-glycero-3-phosphocholine + hexadecanoyl-CoA = 1-(9Z-octadecenoyl)-2-hexadecanoyl-sn-glycero-3-phosphocholine + CoA. The enzyme catalyses 1-eicosanoyl-sn-glycero-3-phosphocholine + hexadecanoyl-CoA = 1-eicosanoyl-2-hexadecanoyl-sn-glycero-3-phosphocholine + CoA. It carries out the reaction hexanoyl-CoA + 1-hexadecanoyl-sn-glycero-3-phosphocholine = 1-hexadecanoyl-2-hexanoyl-sn-glycero-3-phosphocholine + CoA. It catalyses the reaction octanoyl-CoA + 1-hexadecanoyl-sn-glycero-3-phosphocholine = 1-hexadecanoyl-2-octanoyl-sn-glycero-3-phosphocholine + CoA. The catalysed reaction is decanoyl-CoA + 1-hexadecanoyl-sn-glycero-3-phosphocholine = 1-hexadecanoyl-2-decanoyl-sn-glycero-3-phosphocholine + CoA. The enzyme catalyses dodecanoyl-CoA + 1-hexadecanoyl-sn-glycero-3-phosphocholine = 1-hexadecanoyl-2-dodecanoyl-sn-glycero-3-phosphocholine + CoA. It carries out the reaction tetradecanoyl-CoA + 1-hexadecanoyl-sn-glycero-3-phosphocholine = 1-hexadecanoyl-2-tetradecanoyl-sn-glycero-3-phosphocholine + CoA. It catalyses the reaction (9Z,12Z)-octadecadienoyl-CoA + 1-hexadecanoyl-sn-glycero-3-phosphocholine = 1-hexadecanoyl-2-(9Z,12Z-octadecadienoyl)-sn-glycero-3-phosphocholine + CoA. The catalysed reaction is (4Z,7Z,10Z,13Z,16Z,19Z)-docosahexaenoyl-CoA + 1-hexadecanoyl-sn-glycero-3-phosphocholine = 1-hexadecanoyl-2-(4Z,7Z,10Z,13Z,16Z,19Z-docosahexaenoyl)-sn-glycero-3-phosphocholine + CoA. The enzyme catalyses 1-hexadecanoyl-sn-glycero-3-phosphocholine + acetyl-CoA = 1-hexadecanoyl-2-acetyl-sn-glycero-3-phosphocholine + CoA. It carries out the reaction eicosanoyl-CoA + 1-hexadecanoyl-sn-glycero-3-phosphocholine = 1-hexadecanoyl-2-eicosanoyl-sn-glycero-3-phosphocholine + CoA. It catalyses the reaction 1-O-hexadecyl-sn-glycero-3-phosphocholine + acetyl-CoA = 1-O-hexadecyl-2-acetyl-sn-glycero-3-phosphocholine + CoA. The catalysed reaction is a 1-acyl-sn-glycero-3-phosphocholine + hexadecanoyl-CoA = 1-acyl-2-hexadecanoyl-sn-glycero-3-phosphocholine + CoA. The enzyme catalyses a 1-acyl-sn-glycero-3-phosphate + hexadecanoyl-CoA = 1-acyl-2-hexadecanoyl-sn-glycero-3-phosphate + CoA. It carries out the reaction 1-acyl-sn-glycero-3-phospho-(1'-sn-glycerol) + hexadecanoyl-CoA = 1-acyl-2-hexadecanoyl-sn-glycero-3-phospho-(1'-sn-glycerol) + CoA. Its pathway is lipid metabolism; phospholipid metabolism. Functionally, exhibits acyltransferase activity. Exhibits acetyltransferase activity. Activity is calcium-independent. Catalyzes the conversion of lysophosphatidylcholine (1-acyl-sn-glycero-3-phosphocholine or LPC) into phosphatidylcholine (1,2-diacyl-sn-glycero-3-phosphocholine or PC). Catalyzes the conversion 1-acyl-sn-glycerol-3-phosphate (lysophosphatidic acid or LPA) into 1,2-diacyl-sn-glycerol-3-phosphate (phosphatidic acid or PA) by incorporating an acyl moiety at the sn-2 position of the glycerol backbone. Displays a clear preference for saturated fatty acyl-CoAs, and 1-myristoyl or 1-palmitoyl LPC as acyl donors and acceptors, respectively. Involved in platelet-activating factor (PAF) biosynthesis by catalyzing the conversion of the PAF precursor, 1-O-alkyl-sn-glycero-3-phosphocholine (lyso-PAF) into 1-O-alkyl-2-acetyl-sn-glycero-3-phosphocholine (PAF). May synthesize phosphatidylcholine in pulmonary surfactant, thereby playing a pivotal role in respiratory physiology. Involved in the regulation of lipid droplet number and size. The polypeptide is Lysophosphatidylcholine acyltransferase 1 (LPCAT1) (Homo sapiens (Human)).